We begin with the raw amino-acid sequence, 851 residues long: Pentatricopeptide repeat-containing protein At3g54980, mitochondrial (851 aa).

A mitochondrion-targeting transit peptide spans 1–26 (MRSLLVFRKIPSRIRLRNLRNNKPFC). 19 PPR repeats span residues 162-196 (NSRAFNYLLNAYSKDRQTDHAVDIVNQMLELDVIP), 197-231 (FFPYVNRTLSALVQRNSLTEAKELYSRMVAIGVDG), 232-266 (DNVTTQLLMRASLREEKPAEALEVLSRAIERGAEP), 267-301 (DSLLYSLAVQACCKTLDLAMANSLLREMKEKKLCV), 303-337 (SQETYTSVILASVKQGNMDDAIRLKDEMLSDGISM), 338-372 (NVVAATSLITGHCKNNDLVSALVLFDKMEKEGPSP), 373-407 (NSVTFSVLIEWFRKNGEMEKALEFYKKMEVLGLTP), 408-438 (SVFHVHTIIQGWLKGQKHEEALKLFDESFET), 442-476 (NVFVCNTILSWLCKQGKTDEATELLSKMESRGIGP), 477-511 (NVVSYNNVMLGHCRQKNMDLARIVFSNILEKGLKP), 512-546 (NNYTYSILIDGCFRNHDEQNALEVVNHMTSSNIEV), 547-577 (NGVVYQTIINGLCKVGQTSKARELLANMIEE), 583-617 (SCMSYNSIIDGFFKEGEMDSAVAAYEEMCGNGISP), 618-652 (NVITYTSLMNGLCKNNRMDQALEMRDEMKNKGVKL), 653-687 (DIPAYGALIDGFCKRSNMESASALFSELLEEGLNP), 688-722 (SQPIYNSLISGFRNLGNMVAALDLYKKMLKDGLRC), 723-757 (DLGTYTTLIDGLLKDGNLILASELYTEMQAVGLVP), 758-792 (DEIIYTVIVNGLSKKGQFVKVVKMFEEMKKNNVTP), and 793-827 (NVLIYNAVIAGHYREGNLDEAFRLHDEMLDKGILP).

The protein belongs to the PPR family. P subfamily.

It localises to the mitochondrion. The sequence is that of Pentatricopeptide repeat-containing protein At3g54980, mitochondrial from Arabidopsis thaliana (Mouse-ear cress).